We begin with the raw amino-acid sequence, 144 residues long: Prefoldin subunit alpha (144 aa).

This sequence belongs to the prefoldin alpha subunit family. Heterohexamer of two alpha and four beta subunits.

Its subcellular location is the cytoplasm. Molecular chaperone capable of stabilizing a range of proteins. Seems to fulfill an ATP-independent, HSP70-like function in archaeal de novo protein folding. This chain is Prefoldin subunit alpha, found in Metallosphaera sedula (strain ATCC 51363 / DSM 5348 / JCM 9185 / NBRC 15509 / TH2).